Here is a 158-residue protein sequence, read N- to C-terminus: NAD(P)H-quinone oxidoreductase subunit J, chloroplastic (158 aa).

The protein belongs to the complex I 30 kDa subunit family. In terms of assembly, NDH is composed of at least 16 different subunits, 5 of which are encoded in the nucleus.

The protein localises to the plastid. It localises to the chloroplast thylakoid membrane. The enzyme catalyses a plastoquinone + NADH + (n+1) H(+)(in) = a plastoquinol + NAD(+) + n H(+)(out). The catalysed reaction is a plastoquinone + NADPH + (n+1) H(+)(in) = a plastoquinol + NADP(+) + n H(+)(out). NDH shuttles electrons from NAD(P)H:plastoquinone, via FMN and iron-sulfur (Fe-S) centers, to quinones in the photosynthetic chain and possibly in a chloroplast respiratory chain. The immediate electron acceptor for the enzyme in this species is believed to be plastoquinone. Couples the redox reaction to proton translocation, and thus conserves the redox energy in a proton gradient. This is NAD(P)H-quinone oxidoreductase subunit J, chloroplastic from Aethionema grandiflorum (Persian stone-cress).